The chain runs to 382 residues: Galactokinase (382 aa).

34–37 lines the substrate pocket; the sequence is EHTD. Residue 124–130 participates in ATP binding; that stretch reads GAGLSSS. Residues serine 130 and glutamate 162 each coordinate Mg(2+). Aspartate 174 acts as the Proton acceptor in catalysis. Substrate is bound at residue tyrosine 223.

It belongs to the GHMP kinase family. GalK subfamily.

The protein resides in the cytoplasm. The enzyme catalyses alpha-D-galactose + ATP = alpha-D-galactose 1-phosphate + ADP + H(+). The protein operates within carbohydrate metabolism; galactose metabolism. Its function is as follows. Catalyzes the transfer of the gamma-phosphate of ATP to D-galactose to form alpha-D-galactose-1-phosphate (Gal-1-P). This chain is Galactokinase, found in Escherichia coli O81 (strain ED1a).